The chain runs to 194 residues: dTTP/UTP pyrophosphatase (194 aa).

The active-site Proton acceptor is Asp76.

Belongs to the Maf family. YhdE subfamily. It depends on a divalent metal cation as a cofactor.

Its subcellular location is the cytoplasm. It catalyses the reaction dTTP + H2O = dTMP + diphosphate + H(+). The enzyme catalyses UTP + H2O = UMP + diphosphate + H(+). Its function is as follows. Nucleoside triphosphate pyrophosphatase that hydrolyzes dTTP and UTP. May have a dual role in cell division arrest and in preventing the incorporation of modified nucleotides into cellular nucleic acids. In Shewanella oneidensis (strain ATCC 700550 / JCM 31522 / CIP 106686 / LMG 19005 / NCIMB 14063 / MR-1), this protein is dTTP/UTP pyrophosphatase.